A 325-amino-acid chain; its full sequence is Glutarate 2-hydroxylase (325 aa).

3 residues coordinate Fe cation: histidine 160, aspartate 162, and histidine 292.

It belongs to the glutarate hydroxylase family. Homotetramer. The cofactor is Fe(2+).

It carries out the reaction glutarate + 2-oxoglutarate + O2 = (S)-2-hydroxyglutarate + succinate + CO2. It participates in amino-acid degradation. Its function is as follows. Acts as an alpha-ketoglutarate-dependent dioxygenase catalyzing hydroxylation of glutarate (GA) to L-2-hydroxyglutarate (L2HG). Functions in a L-lysine degradation pathway that proceeds via cadaverine, glutarate and L-2-hydroxyglutarate. This chain is Glutarate 2-hydroxylase, found in Klebsiella pneumoniae (strain 342).